The primary structure comprises 91 residues: DNA-directed RNA polymerase subunit omega (91 aa).

Belongs to the RNA polymerase subunit omega family. As to quaternary structure, the RNAP catalytic core consists of 2 alpha, 1 beta, 1 beta' and 1 omega subunit. When a sigma factor is associated with the core the holoenzyme is formed, which can initiate transcription.

The catalysed reaction is RNA(n) + a ribonucleoside 5'-triphosphate = RNA(n+1) + diphosphate. Promotes RNA polymerase assembly. Latches the N- and C-terminal regions of the beta' subunit thereby facilitating its interaction with the beta and alpha subunits. The sequence is that of DNA-directed RNA polymerase subunit omega from Photorhabdus laumondii subsp. laumondii (strain DSM 15139 / CIP 105565 / TT01) (Photorhabdus luminescens subsp. laumondii).